We begin with the raw amino-acid sequence, 130 residues long: Large ribosomal subunit protein bL12 (130 aa).

It belongs to the bacterial ribosomal protein bL12 family. In terms of assembly, homodimer. Part of the ribosomal stalk of the 50S ribosomal subunit. Forms a multimeric L10(L12)X complex, where L10 forms an elongated spine to which 2 to 4 L12 dimers bind in a sequential fashion. Binds GTP-bound translation factors.

Functionally, forms part of the ribosomal stalk which helps the ribosome interact with GTP-bound translation factors. Is thus essential for accurate translation. The sequence is that of Large ribosomal subunit protein bL12 from Mycolicibacterium paratuberculosis (strain ATCC BAA-968 / K-10) (Mycobacterium paratuberculosis).